A 227-amino-acid polypeptide reads, in one-letter code: tRNA (guanine-N(7)-)-methyltransferase (227 aa).

Positions 60, 85, 112, and 135 each coordinate S-adenosyl-L-methionine. The active site involves Asp135. Substrate-binding positions include Lys139, Asp171, and 206–209 (TKFE).

This sequence belongs to the class I-like SAM-binding methyltransferase superfamily. TrmB family.

The catalysed reaction is guanosine(46) in tRNA + S-adenosyl-L-methionine = N(7)-methylguanosine(46) in tRNA + S-adenosyl-L-homocysteine. It participates in tRNA modification; N(7)-methylguanine-tRNA biosynthesis. In terms of biological role, catalyzes the formation of N(7)-methylguanine at position 46 (m7G46) in tRNA. This chain is tRNA (guanine-N(7)-)-methyltransferase, found in Thiobacillus denitrificans (strain ATCC 25259 / T1).